The following is a 541-amino-acid chain: Chaperonin GroEL 2 (541 aa).

ATP is bound by residues 29–32, 86–90, glycine 413, and aspartate 492; these read TLGP and DGTTT.

This sequence belongs to the chaperonin (HSP60) family. Forms a cylinder of 14 subunits composed of two heptameric rings stacked back-to-back. Interacts with the co-chaperonin GroES.

The protein resides in the cytoplasm. It carries out the reaction ATP + H2O + a folded polypeptide = ADP + phosphate + an unfolded polypeptide.. In terms of biological role, together with its co-chaperonin GroES, plays an essential role in assisting protein folding. The GroEL-GroES system forms a nano-cage that allows encapsulation of the non-native substrate proteins and provides a physical environment optimized to promote and accelerate protein folding. This is Chaperonin GroEL 2 from Nocardia farcinica (strain IFM 10152).